Consider the following 264-residue polypeptide: Regulatory protein RecX (264 aa).

It belongs to the RecX family.

It is found in the cytoplasm. Its function is as follows. Modulates RecA activity. The sequence is that of Regulatory protein RecX from Lacticaseibacillus casei (strain BL23) (Lactobacillus casei).